Here is a 440-residue protein sequence, read N- to C-terminus: MSEFSQTVPELVAWARKNDFSISLPVDRLSFLLAVATLNGERLDGEMSEGELVDAFRHVSDAFEQTSETIGVRANNAINDMVRQRLLNRFTSEQAEGNAIYRLTPLGIGITDYYIRQREFSTLRLSMQLSIVAGELKRAADAAAEGGDEFHWHRNVYAPLKYSVAEIFDSIDLTQRIMDEQQQQVKDDIAQLLNKDWRAAISSCELLLSETSGTLRELQDTLEAAGDKLQANLLRIQDATMTHDDLHFVDRLVFDLQSKLDRIISWGQQSIDLWIGYDRHVHKFIRTAIDMDKNRVFAQRLRQSVQTYFDDPWALTYTNADRLLDMRDEEMALRDDEVTGELPPDLEYEEFNEIREQLAAIIEEQLAIYKTRQTPLDLGLVVREYLAQYPRARHFDVARIVIDQAVRLGVAQADFTGLPAKWQPINDYGAKVQAHVIDKY.

Residues 208–236 (LSETSGTLRELQDTLEAAGDKLQANLLRI) are leucine-zipper.

Belongs to the MukF family. In terms of assembly, interacts, and probably forms a ternary complex, with MukE and MukB via its C-terminal region. The complex formation is stimulated by calcium or magnesium. It is required for an interaction between MukE and MukB.

It localises to the cytoplasm. The protein localises to the nucleoid. Functionally, involved in chromosome condensation, segregation and cell cycle progression. May participate in facilitating chromosome segregation by condensation DNA from both sides of a centrally located replisome during cell division. Not required for mini-F plasmid partitioning. Probably acts via its interaction with MukB and MukE. Overexpression results in anucleate cells. It has a calcium binding activity. This Salmonella paratyphi B (strain ATCC BAA-1250 / SPB7) protein is Chromosome partition protein MukF.